Here is a 240-residue protein sequence, read N- to C-terminus: Small ribosomal subunit protein uS3 (240 aa).

The KH type-2 domain maps to 39–109; it reads IRQYVEKNLS…QIRINVVEVA (71 aa). Residues 214-240 form a disordered region; that stretch reads EEQAPAQPATTPKRQRRRQQFEDRSNE.

The protein belongs to the universal ribosomal protein uS3 family. As to quaternary structure, part of the 30S ribosomal subunit. Forms a tight complex with proteins S10 and S14.

Binds the lower part of the 30S subunit head. Binds mRNA in the 70S ribosome, positioning it for translation. The sequence is that of Small ribosomal subunit protein uS3 from Gloeothece citriformis (strain PCC 7424) (Cyanothece sp. (strain PCC 7424)).